The primary structure comprises 356 residues: MKYLYLEITSRCNLRCEMCFKQHWEDEEGDMDYDLFLKILDDAEKFPELKMIYFGGIGEPTVHPRFMDMVREVKKRGFALGISTNGTLLTDEMLKELAELGVDLVYFSMDVLPTAQNVVTLGHILAGVTAEKIKKLVKYREEVGTHKPSIGVEVVVTKENYKQLPELARYLLNLGVDAMLVSNLLPLTPEQVNDIVYDGSIDMTPIVNELYKIAHNGLYIKLPYFELKTERVCDFDENKVAVIRWDGEVVPCYRFLHTYREYIFGREKKVNTYSFGNVREKSLADIWTSERYTWFRFITKNYLYPSCTDCSLRDACDFVKTTDIDCWGNEPSCADCLWSRRIVMCPIPQYNFGKFL.

One can recognise a Radical SAM core domain in the interval 1–214; the sequence is MKYLYLEITS…PIVNELYKIA (214 aa). Residues Cys-12, Cys-16, and Cys-19 each contribute to the [4Fe-4S] cluster site.

It belongs to the radical SAM superfamily. [4Fe-4S] cluster is required as a cofactor.

Involved in the biosynthesis of a molybdopterin-based tungsten cofactor. The sequence is that of Tungsten-containing aldehyde ferredoxin oxidoreductase cofactor-modifying protein (cmo) from Pyrococcus furiosus (strain ATCC 43587 / DSM 3638 / JCM 8422 / Vc1).